A 556-amino-acid chain; its full sequence is Arginine--tRNA ligase (556 aa).

The 'HIGH' region signature appears at 134 to 144 (ANPTGPLHIGH).

The protein belongs to the class-I aminoacyl-tRNA synthetase family. In terms of assembly, monomer.

The protein localises to the cytoplasm. It catalyses the reaction tRNA(Arg) + L-arginine + ATP = L-arginyl-tRNA(Arg) + AMP + diphosphate. The protein is Arginine--tRNA ligase of Micrococcus luteus (strain ATCC 4698 / DSM 20030 / JCM 1464 / CCM 169 / CCUG 5858 / IAM 1056 / NBRC 3333 / NCIMB 9278 / NCTC 2665 / VKM Ac-2230) (Micrococcus lysodeikticus).